The chain runs to 263 residues: MEMKKRISLELRNRSPAEVAELVLDNCRSVDGEIEGLNDSYKELEFLSMANVELKSLSKLPKLPKLRKLELSDNSISGGLDVLTERCPNITYLNLSGNKIKDLSTVEALASLKNLKSLDLFNCEITNLEDYRENIFQRLSQITYLDGFDQEDNEAPDSEEDDDDDDYDDDEEPGPRRYEAEEDEEDEESASDLGEEEEEEEEVGLSYLMKEEIRDEEDDDDYVEDGAEGEEEEEEDEEDEAAAADQGEKRKRDPEDEGDEDED.

3 LRR repeats span residues 43–64 (ELEFLSMANVELKSLSKLPKLP), 65–84 (KLRKLELSDNSISGGLDVLT), and 89–110 (NITYLNLSGNKIKDLSTVEALA). Residues 123 to 161 (CEITNLEDYRENIFQRLSQITYLDGFDQEDNEAPDSEED) form the LRRCT domain. Residues 146-263 (DGFDQEDNEA…PEDEGDEDED (118 aa)) form a disordered region. Acidic residues-rich tracts occupy residues 148–172 (FDQEDNEAPDSEEDDDDDDYDDDEE), 180–203 (AEEDEEDEESASDLGEEEEEEEEV), and 214–242 (RDEEDDDDYVEDGAEGEEEEEEDEEDEAA). The ZID domain stretch occupies residues 202 to 263 (EVGLSYLMKE…PEDEGDEDED (62 aa)).

Belongs to the ANP32 family. Component of a SWR1-like complex. Interacts with H2A.Z/H2AZ1. Phosphorylated. The phosphorylation is nuclear localization signal (NLS)-dependent.

Its subcellular location is the cytoplasm. It localises to the nucleus. Functionally, histone chaperone that specifically mediates the genome-wide removal of histone H2A.Z/H2AZ1 from the nucleosome: removes H2A.Z/H2AZ1 from its normal sites of deposition, especially from enhancer and insulator regions. Not involved in deposition of H2A.Z/H2AZ1 in the nucleosome. May stabilize the evicted H2A.Z/H2AZ1-H2B dimer, thus shifting the equilibrium towards dissociation and the off-chromatin state. Inhibits activity of protein phosphatase 2A (PP2A). Does not inhibit protein phosphatase 1. May play a role in cerebellar development and synaptogenesis. This chain is Acidic leucine-rich nuclear phosphoprotein 32 family member E (anp32e), found in Xenopus laevis (African clawed frog).